Here is a 294-residue protein sequence, read N- to C-terminus: Phosphatidylserine decarboxylase proenzyme (294 aa).

Residues aspartate 100, histidine 157, and serine 261 each act as charge relay system; for autoendoproteolytic cleavage activity in the active site. Serine 261 acts as the Schiff-base intermediate with substrate; via pyruvic acid; for decarboxylase activity in catalysis. Serine 261 carries the pyruvic acid (Ser); by autocatalysis modification.

This sequence belongs to the phosphatidylserine decarboxylase family. PSD-B subfamily. Prokaryotic type I sub-subfamily. As to quaternary structure, heterodimer of a large membrane-associated beta subunit and a small pyruvoyl-containing alpha subunit. It depends on pyruvate as a cofactor. Is synthesized initially as an inactive proenzyme. Formation of the active enzyme involves a self-maturation process in which the active site pyruvoyl group is generated from an internal serine residue via an autocatalytic post-translational modification. Two non-identical subunits are generated from the proenzyme in this reaction, and the pyruvate is formed at the N-terminus of the alpha chain, which is derived from the carboxyl end of the proenzyme. The autoendoproteolytic cleavage occurs by a canonical serine protease mechanism, in which the side chain hydroxyl group of the serine supplies its oxygen atom to form the C-terminus of the beta chain, while the remainder of the serine residue undergoes an oxidative deamination to produce ammonia and the pyruvoyl prosthetic group on the alpha chain. During this reaction, the Ser that is part of the protease active site of the proenzyme becomes the pyruvoyl prosthetic group, which constitutes an essential element of the active site of the mature decarboxylase.

The protein resides in the cell membrane. It catalyses the reaction a 1,2-diacyl-sn-glycero-3-phospho-L-serine + H(+) = a 1,2-diacyl-sn-glycero-3-phosphoethanolamine + CO2. It participates in phospholipid metabolism; phosphatidylethanolamine biosynthesis; phosphatidylethanolamine from CDP-diacylglycerol: step 2/2. Functionally, catalyzes the formation of phosphatidylethanolamine (PtdEtn) from phosphatidylserine (PtdSer). In Mannheimia succiniciproducens (strain KCTC 0769BP / MBEL55E), this protein is Phosphatidylserine decarboxylase proenzyme.